A 578-amino-acid chain; its full sequence is G protein-coupled receptor kinase 4 (578 aa).

The residue at position 1 (M1) is an N-acetylmethionine. Positions 1–154 (MELENIVANS…ECTRVAHNYL (154 aa)) are N-terminal. In terms of domain architecture, RGS spans 52–172 (DYSSLCDKQP…QESSYFSQFL (121 aa)). The region spanning 187-449 (FRHYRVLGKG…AAGVKQHPVF (263 aa)) is the Protein kinase domain. ATP is bound by residues 193 to 201 (LGKGGFGEV) and K216. D312 functions as the Proton acceptor in the catalytic mechanism. Residues 450-515 (KDINFRRLEA…GCVSIPWQNE (66 aa)) enclose the AGC-kinase C-terminal domain. Residue S485 is modified to Phosphoserine.

It belongs to the protein kinase superfamily. AGC Ser/Thr protein kinase family. GPRK subfamily. As to quaternary structure, interacts with DRD3. In terms of processing, palmitoylated. In terms of tissue distribution, isoform 1, isoform 2, isoform 3, and isoform 4 are expressed in testis. Isoform 4 is expressed in myometrium.

The protein localises to the cytoplasm. It localises to the cell cortex. It carries out the reaction [G-protein-coupled receptor] + ATP = [G-protein-coupled receptor]-phosphate + ADP + H(+). Inhibited by heparin. Specifically phosphorylates the activated forms of G protein-coupled receptors. GRK4-alpha can phosphorylate rhodopsin and its activity is inhibited by calmodulin; the other three isoforms do not phosphorylate rhodopsin and do not interact with calmodulin. GRK4-alpha and GRK4-gamma phosphorylate DRD3. Phosphorylates ADRB2. This is G protein-coupled receptor kinase 4 (GRK4) from Homo sapiens (Human).